The sequence spans 223 residues: Sigma non-opioid intracellular receptor 1 (223 aa).

At 1–9 (MQWAAGRRW) the chain is on the lumenal side. The targeting to endoplasmic reticulum-associated lipid droplets stretch occupies residues 2–8 (QWAAGRR). The chain crosses the membrane as a helical span at residues 10 to 30 (AWITLFLTIVAVLIQAVWLWL). Residues 31–223 (GTQSFVFQRE…LTTYLFGQDS (193 aa)) lie on the Cytoplasmic side of the membrane. Residues 99–106 (SLSEYVLL) are important for ligand-binding. Residues 177–223 (VIPSTLAFALSDTIFSTQDFLTLFYTLRAYARGLRLELTTYLFGQDS) form a C-terminal hydrophobic region region.

It belongs to the ERG2 family. Homotrimer. Forms a ternary complex with ANK2 and ITPR3. The complex is disrupted by agonists. Interacts with KCNA4. Interacts with KCNA2; cocaine consumption leads to increased interaction. Interacts with RNF112 in an oxidative stress-regulated manner.

It localises to the nucleus inner membrane. The protein localises to the nucleus outer membrane. The protein resides in the nucleus envelope. Its subcellular location is the cytoplasmic vesicle. It is found in the endoplasmic reticulum membrane. It localises to the membrane. The protein localises to the lipid droplet. The protein resides in the cell junction. Its subcellular location is the cell membrane. It is found in the cell projection. It localises to the growth cone. The protein localises to the postsynaptic density membrane. In terms of biological role, functions in lipid transport from the endoplasmic reticulum and is involved in a wide array of cellular functions probably through regulation of the biogenesis of lipid microdomains at the plasma membrane. Involved in the regulation of different receptors it plays a role in BDNF signaling and EGF signaling. Also regulates ion channels like the potassium channel and could modulate neurotransmitter release. Plays a role in calcium signaling through modulation together with ANK2 of the ITP3R-dependent calcium efflux at the endoplasmic reticulum. Plays a role in several other cell functions including proliferation, survival and death. Originally identified for its ability to bind various psychoactive drugs it is involved in learning processes, memory and mood alteration. Necessary for proper mitochondrial axonal transport in motor neurons, in particular the retrograde movement of mitochondria. Plays a role in protecting cells against oxidative stress-induced cell death via its interaction with RNF112. The protein is Sigma non-opioid intracellular receptor 1 (SIGMAR1) of Trichosurus vulpecula (Brush-tailed possum).